Here is a 156-residue protein sequence, read N- to C-terminus: AP-1 complex subunit sigma-1 (156 aa).

This sequence belongs to the adaptor complexes small subunit family. In terms of assembly, adapter protein complex 1 (AP-1) is a heterotetramer composed of two large adaptins (gamma-type subunit APL4 and beta-type subunit APL2), a medium adaptin (mu-type subunit APM1) and a small adaptin (sigma-type subunit APS1). AP-1 interacts with clathrin. Also a component of the AP-1R complex composed of at least APM2, APL4 and APS1.

It is found in the cytoplasm. The protein resides in the nucleus. It localises to the cytoplasmic vesicle. Its subcellular location is the clathrin-coated vesicle membrane. The protein localises to the endosome. It is found in the golgi apparatus. Component of the adapter complexes which link clathrin to receptors in coated vesicles. Clathrin-associated protein complexes are believed to interact with the cytoplasmic tails of membrane proteins, leading to their selection and concentration. AP19 is probably a subunit of the Golgi membrane adapter. Component of the AP-1-related (AP-1R) complex, an adapter protein complex that mediates sorting of cargo SNARE SNC1. In contrast to the APM1-containing AP-1 complex, AP-1R is incapable of sorting CHS3. In Saccharomyces cerevisiae (strain ATCC 204508 / S288c) (Baker's yeast), this protein is AP-1 complex subunit sigma-1 (APS1).